Here is a 1107-residue protein sequence, read N- to C-terminus: Polyphosphatidylinositol phosphatase INP53 (1107 aa).

The SAC domain maps to 142 to 482 (LKKLLSNGSF…GDQISQIYTG (341 aa)). Serine 497 is modified (phosphoserine). The disordered stretch occupies residues 926 to 1107 (TASSVASSSP…LDSWQPLTPK (182 aa)). The span at 927–942 (ASSVASSSPVSSASAS) shows a compositional bias: low complexity. The segment covering 943 to 956 (LQPVRTQNSSQSRT) has biased composition (polar residues). Position 986 is a phosphoserine (serine 986). 4 stretches are compositionally biased toward polar residues: residues 987–1005 (PTPQ…NIQE), 1020–1038 (FSQN…SPMS), 1045–1063 (NSAS…QTPT), and 1097–1107 (TLDSWQPLTPK). The residue at position 1035 (serine 1035) is a Phosphoserine. Position 1105 is a phosphothreonine (threonine 1105).

The protein belongs to the synaptojanin family. In the central section; belongs to the inositol 1,4,5-trisphosphate 5-phosphatase family. In terms of assembly, interacts (via SAC domain) with BSP1; the interaction is direct. Interacts with CHC1.

The protein resides in the cytoplasm. The catalysed reaction is a 1,2-diacyl-sn-glycero-3-phospho-(1D-myo-inositol-4,5-bisphosphate) + H2O = a 1,2-diacyl-sn-glycero-3-phospho-(1D-myo-inositol 4-phosphate) + phosphate. Dephosphorylates a number of phosphatidylinositols (PIs) like phosphatidylinositol 4,5-bisphosphate (PtdIns(4,5)P2), but also phosphatidylinositol 3-phosphate (PtdIns(3)P), phosphatidylinositol 4-phosphate (PtdIns(4)P), and phosphatidylinositol 3,5-bisphosphate (PtdIns(3,5)P2). Controls the cellular levels and subcellular distribution of phosphatidylinositol 3-phosphate and phosphatidylinositol 4,5-bisphosphate. Plays an essential role in a TGN (trans Golgi network)-to-early endosome pathway. Involved in clathrin-mediated protein sorting at the TGN. This chain is Polyphosphatidylinositol phosphatase INP53 (INP53), found in Saccharomyces cerevisiae (strain ATCC 204508 / S288c) (Baker's yeast).